A 59-amino-acid chain; its full sequence is INGDCELPKVVGRCRARFPRYYYNLSSRRCEKFIYGGCGGNANNFHTLEECEKVCGVRS.

The region spanning 5 to 55 (CELPKVVGRCRARFPRYYYNLSSRRCEKFIYGGCGGNANNFHTLEECEKVC) is the BPTI/Kunitz inhibitor domain. 3 disulfides stabilise this stretch: cysteine 5–cysteine 55, cysteine 14–cysteine 38, and cysteine 30–cysteine 51.

Belongs to the venom Kunitz-type family. Sea anemone type 2 potassium channel toxin subfamily.

The protein resides in the secreted. It is found in the nematocyst. Dual-function toxin that inhibits both the serine protease trypsin (Kd&lt;30 nM) and voltage-gated potassium channels Kv1.2/KCNA2 (IC(50)=1300 nM). The polypeptide is KappaPI-actitoxin-Avd3d (Anemonia sulcata (Mediterranean snakelocks sea anemone)).